We begin with the raw amino-acid sequence, 213 residues long: Ribosomal RNA small subunit methyltransferase G (213 aa).

S-adenosyl-L-methionine-binding positions include glycine 72, phenylalanine 77, isoleucine 125–glutamate 126, and arginine 141.

Belongs to the methyltransferase superfamily. RNA methyltransferase RsmG family.

It localises to the cytoplasm. It carries out the reaction guanosine(527) in 16S rRNA + S-adenosyl-L-methionine = N(7)-methylguanosine(527) in 16S rRNA + S-adenosyl-L-homocysteine. Its function is as follows. Specifically methylates the N7 position of guanine in position 527 of 16S rRNA. In Rhizobium meliloti (strain 1021) (Ensifer meliloti), this protein is Ribosomal RNA small subunit methyltransferase G.